A 288-amino-acid chain; its full sequence is NAD kinase (288 aa).

Asp-73 (proton acceptor) is an active-site residue. NAD(+) is bound by residues 73-74 (DG), Arg-78, 144-145 (NE), Asp-174, 185-190 (TAYSLS), and Ala-209.

Belongs to the NAD kinase family. A divalent metal cation is required as a cofactor.

Its subcellular location is the cytoplasm. The enzyme catalyses NAD(+) + ATP = ADP + NADP(+) + H(+). Its function is as follows. Involved in the regulation of the intracellular balance of NAD and NADP, and is a key enzyme in the biosynthesis of NADP. Catalyzes specifically the phosphorylation on 2'-hydroxyl of the adenosine moiety of NAD to yield NADP. This chain is NAD kinase, found in Porphyromonas gingivalis (strain ATCC BAA-308 / W83).